The primary structure comprises 340 residues: Guanine nucleotide-binding protein G(I)/G(S)/G(T) subunit beta-1 (340 aa).

WD repeat units lie at residues 53–83, 95–125, 141–170, 182–212, 224–254, 268–298, and 310–340; these read GHLA…IIWD, LRSS…PIYN, GHTG…ALWD, GHTG…KLWD, GHES…RLFD, NIIC…NVWD, and GHDN…KIWN.

The protein belongs to the WD repeat G protein beta family. As to quaternary structure, g proteins are composed of 3 units, alpha, beta and gamma.

In terms of biological role, guanine nucleotide-binding proteins (G proteins) are involved as a modulator or transducer in various transmembrane signaling systems. The beta and gamma chains are required for the GTPase activity, for replacement of GDP by GTP, and for G protein-effector interaction. The polypeptide is Guanine nucleotide-binding protein G(I)/G(S)/G(T) subunit beta-1 (gnb1) (Xenopus laevis (African clawed frog)).